Here is a 242-residue protein sequence, read N- to C-terminus: Copper transport protein B (242 aa).

Transmembrane regions (helical) follow at residues 8-28 (ICLC…ACVL) and 86-106 (ITGP…TAGY). The disordered stretch occupies residues 153 to 175 (ESATTNVPSSQTPNESSPLVAGR). Positions 154-169 (SATTNVPSSQTPNESS) are enriched in polar residues. The next 2 membrane-spanning stretches (helical) occupy residues 187 to 207 (IILA…MLLF) and 210 to 230 (YNGF…LVFG).

Belongs to the copper transporter (Ctr) (TC 1.A.56) family. SLC31A subfamily.

It localises to the membrane. Transporter that is probably involved in the transport of copper, even if it does not act as a major copper transporter. This chain is Copper transport protein B, found in Aspergillus fumigatus (strain ATCC MYA-4609 / CBS 101355 / FGSC A1100 / Af293) (Neosartorya fumigata).